The following is a 305-amino-acid chain: tRNA dimethylallyltransferase (305 aa).

11–18 (GPTAVGKT) is a binding site for ATP. 13-18 (TAVGKT) provides a ligand contact to substrate. The tract at residues 36 to 39 (DSMQ) is interaction with substrate tRNA.

Belongs to the IPP transferase family. Monomer. Requires Mg(2+) as cofactor.

It carries out the reaction adenosine(37) in tRNA + dimethylallyl diphosphate = N(6)-dimethylallyladenosine(37) in tRNA + diphosphate. Catalyzes the transfer of a dimethylallyl group onto the adenine at position 37 in tRNAs that read codons beginning with uridine, leading to the formation of N6-(dimethylallyl)adenosine (i(6)A). This is tRNA dimethylallyltransferase from Listeria monocytogenes serotype 4b (strain CLIP80459).